A 179-amino-acid chain; its full sequence is Sec-independent protein translocase protein TatB (179 aa).

Residues 2-22 traverse the membrane as a helical segment; sequence FNGVGWGEVVVLLLIGLFVFG. Over residues 98–109 the composition is skewed to low complexity; the sequence is LLGDDPPAAPSL. The segment at 98-179 is disordered; the sequence is LLGDDPPAAP…TEVPFDSDAT (82 aa).

Belongs to the TatB family. As to quaternary structure, the Tat system comprises two distinct complexes: a TatABC complex, containing multiple copies of TatA, TatB and TatC subunits, and a separate TatA complex, containing only TatA subunits. Substrates initially bind to the TatABC complex, which probably triggers association of the separate TatA complex to form the active translocon.

Its subcellular location is the cell membrane. In terms of biological role, part of the twin-arginine translocation (Tat) system that transports large folded proteins containing a characteristic twin-arginine motif in their signal peptide across membranes. Together with TatC, TatB is part of a receptor directly interacting with Tat signal peptides. TatB may form an oligomeric binding site that transiently accommodates folded Tat precursor proteins before their translocation. In Frankia casuarinae (strain DSM 45818 / CECT 9043 / HFP020203 / CcI3), this protein is Sec-independent protein translocase protein TatB.